A 320-amino-acid polypeptide reads, in one-letter code: MIKKIGVLTSGGDAPGMNAAIRGVVRAALSKGLDVYGIHDGYLGLYEGRIEQLDRHSVSDVINRGGTFLGSARFPEFRDEKVREKAVENMREFGLDALVVIGGDGSYLGAKRLTEMGFPCIGLPGTIDNDVAGTDYTIGYFTALETVVEAIDRLRDTSSSHQRISIVEVMGRYCGDLTLAAAIAGGCEYIVLPEVEFKREDLVEEIKVGITKGKKHAIVAITEHICDVDELAKFIEQETGRETRSTVLGHIQRGGAPVAYDRILASRMGAYSIELLLQGYGGRCVGIQNEKLVHHDIIDAVENMKRPFKGDWLDTAKMLF.

ATP is bound at residue Gly-12. 22-26 (RGVVR) lines the ADP pocket. ATP is bound by residues 73 to 74 (RF) and 103 to 106 (GDGS). Position 104 (Asp-104) interacts with Mg(2+). A substrate-binding site is contributed by 126 to 128 (TID). Asp-128 (proton acceptor) is an active-site residue. Arg-155 provides a ligand contact to ADP. Substrate is bound by residues Arg-163 and 170-172 (MGR). ADP-binding positions include 186 to 188 (GCE), Lys-212, and 214 to 216 (KKH). Residues Glu-223, Arg-244, and 250-253 (HIQR) contribute to the substrate site.

This sequence belongs to the phosphofructokinase type A (PFKA) family. ATP-dependent PFK group I subfamily. Prokaryotic clade 'B1' sub-subfamily. In terms of assembly, homotetramer. Requires Mg(2+) as cofactor.

The protein localises to the cytoplasm. The enzyme catalyses beta-D-fructose 6-phosphate + ATP = beta-D-fructose 1,6-bisphosphate + ADP + H(+). It participates in carbohydrate degradation; glycolysis; D-glyceraldehyde 3-phosphate and glycerone phosphate from D-glucose: step 3/4. Its activity is regulated as follows. Allosterically activated by ADP and other diphosphonucleosides, and allosterically inhibited by phosphoenolpyruvate. Its function is as follows. Catalyzes the phosphorylation of D-fructose 6-phosphate to fructose 1,6-bisphosphate by ATP, the first committing step of glycolysis. The chain is ATP-dependent 6-phosphofructokinase from Edwardsiella ictaluri (strain 93-146).